Consider the following 141-residue polypeptide: Neuropeptides CP2 (141 aa).

The N-terminal stretch at 1-26 is a signal peptide; it reads MDSRICTSFARLMASALCVSTLLVTA. Residues 75 to 94 are disordered; the sequence is KVDMPLPRQRTSSRSSERWA. His140 is subject to Histidine amide.

Neurons.

It localises to the secreted. Mediates intrinsic neuromodulation. This Aplysia californica (California sea hare) protein is Neuropeptides CP2 (CP2PP).